Here is a 76-residue protein sequence, read N- to C-terminus: Acyl carrier protein (76 aa).

A Carrier domain is found at 1-76 (MAIFDDIKEV…DVVRYIETNK (76 aa)). Ser-36 is modified (O-(pantetheine 4'-phosphoryl)serine).

This sequence belongs to the acyl carrier protein (ACP) family. Post-translationally, 4'-phosphopantetheine is transferred from CoA to a specific serine of apo-ACP by AcpS. This modification is essential for activity because fatty acids are bound in thioester linkage to the sulfhydryl of the prosthetic group.

It localises to the cytoplasm. Its pathway is lipid metabolism; fatty acid biosynthesis. Functionally, carrier of the growing fatty acid chain in fatty acid biosynthesis. This is Acyl carrier protein from Wolinella succinogenes (strain ATCC 29543 / DSM 1740 / CCUG 13145 / JCM 31913 / LMG 7466 / NCTC 11488 / FDC 602W) (Vibrio succinogenes).